Reading from the N-terminus, the 84-residue chain is Cell division topological specificity factor (84 aa).

This sequence belongs to the MinE family.

Functionally, prevents the cell division inhibition by proteins MinC and MinD at internal division sites while permitting inhibition at polar sites. This ensures cell division at the proper site by restricting the formation of a division septum at the midpoint of the long axis of the cell. The protein is Cell division topological specificity factor of Ralstonia nicotianae (strain ATCC BAA-1114 / GMI1000) (Ralstonia solanacearum).